A 182-amino-acid chain; its full sequence is Transcription termination/antitermination protein NusG (182 aa).

One can recognise a KOW domain in the interval 131–163 (VGEQVRIKSGPFANQVGEVQEIETDKFKLTVLV).

It belongs to the NusG family.

Functionally, participates in transcription elongation, termination and antitermination. The protein is Transcription termination/antitermination protein NusG of Staphylococcus aureus (strain NCTC 8325 / PS 47).